A 310-amino-acid polypeptide reads, in one-letter code: tRNA-cytidine(32) 2-sulfurtransferase (310 aa).

Positions 58-63 (SGGKDS) match the PP-loop motif motif. Residues C133, C136, and C224 each coordinate [4Fe-4S] cluster.

This sequence belongs to the TtcA family. As to quaternary structure, homodimer. Mg(2+) serves as cofactor. Requires [4Fe-4S] cluster as cofactor.

Its subcellular location is the cytoplasm. The catalysed reaction is cytidine(32) in tRNA + S-sulfanyl-L-cysteinyl-[cysteine desulfurase] + AH2 + ATP = 2-thiocytidine(32) in tRNA + L-cysteinyl-[cysteine desulfurase] + A + AMP + diphosphate + H(+). The protein operates within tRNA modification. Its function is as follows. Catalyzes the ATP-dependent 2-thiolation of cytidine in position 32 of tRNA, to form 2-thiocytidine (s(2)C32). The sulfur atoms are provided by the cysteine/cysteine desulfurase (IscS) system. The polypeptide is tRNA-cytidine(32) 2-sulfurtransferase (Paracidovorax citrulli (strain AAC00-1) (Acidovorax citrulli)).